Consider the following 197-residue polypeptide: Probable chorismate pyruvate-lyase 2 (197 aa).

Basic and acidic residues predominate over residues 1–14 (MRFDAADAHWRETP). The interval 1-23 (MRFDAADAHWRETPRPGASSAQK) is disordered. 3 residues coordinate substrate: Arg-73, Leu-111, and Glu-173.

This sequence belongs to the UbiC family.

It localises to the cytoplasm. It carries out the reaction chorismate = 4-hydroxybenzoate + pyruvate. The protein operates within cofactor biosynthesis; ubiquinone biosynthesis. In terms of biological role, removes the pyruvyl group from chorismate, with concomitant aromatization of the ring, to provide 4-hydroxybenzoate (4HB) for the ubiquinone pathway. The polypeptide is Probable chorismate pyruvate-lyase 2 (Burkholderia pseudomallei (strain 1710b)).